We begin with the raw amino-acid sequence, 250 residues long: Ribosomal RNA small subunit methyltransferase G (250 aa).

S-adenosyl-L-methionine contacts are provided by residues Gly78, Leu83, 129-130 (AE), and Arg144. The disordered stretch occupies residues 224–250 (IAAPRKRGGQQRRAGHARGTSNRRRGT). A compositionally biased stretch (basic residues) spans 227–250 (PRKRGGQQRRAGHARGTSNRRRGT).

The protein belongs to the methyltransferase superfamily. RNA methyltransferase RsmG family.

The protein resides in the cytoplasm. Functionally, specifically methylates the N7 position of guanine in position 518 of 16S rRNA. This Nocardioides sp. (strain ATCC BAA-499 / JS614) protein is Ribosomal RNA small subunit methyltransferase G.